The sequence spans 104 residues: Pyrimidine/purine nucleoside phosphorylase (104 aa).

This sequence belongs to the nucleoside phosphorylase PpnP family.

The catalysed reaction is a purine D-ribonucleoside + phosphate = a purine nucleobase + alpha-D-ribose 1-phosphate. It carries out the reaction adenosine + phosphate = alpha-D-ribose 1-phosphate + adenine. It catalyses the reaction cytidine + phosphate = cytosine + alpha-D-ribose 1-phosphate. The enzyme catalyses guanosine + phosphate = alpha-D-ribose 1-phosphate + guanine. The catalysed reaction is inosine + phosphate = alpha-D-ribose 1-phosphate + hypoxanthine. It carries out the reaction thymidine + phosphate = 2-deoxy-alpha-D-ribose 1-phosphate + thymine. It catalyses the reaction uridine + phosphate = alpha-D-ribose 1-phosphate + uracil. The enzyme catalyses xanthosine + phosphate = alpha-D-ribose 1-phosphate + xanthine. In terms of biological role, catalyzes the phosphorolysis of diverse nucleosides, yielding D-ribose 1-phosphate and the respective free bases. Can use uridine, adenosine, guanosine, cytidine, thymidine, inosine and xanthosine as substrates. Also catalyzes the reverse reactions. The chain is Pyrimidine/purine nucleoside phosphorylase from Trichlorobacter lovleyi (strain ATCC BAA-1151 / DSM 17278 / SZ) (Geobacter lovleyi).